A 766-amino-acid polypeptide reads, in one-letter code: Phospholipid phosphatase-related protein type 4 (766 aa).

Ser37 is subject to Phosphoserine. Helical transmembrane passes span 68–88 (LPCFYFVELPILASSVVSLYF), 120–140 (AIPFLMLLSLAFAGPAITIMV), and 179–199 (FVGVHVFGLCSTALITDIIQL). Residues Asn215 and Asn220 are each glycosylated (N-linked (GlcNAc...) asparagine). A helical membrane pass occupies residues 248–268 (SFPSQHATLAAFAAVYVSMYF). An N-linked (GlcNAc...) asparagine glycan is attached at Asn269. The next 2 helical transmembrane spans lie at 277–297 (KLLKPLLVFTFIICGIICGLT) and 309–329 (VYCGFLIGGGIALYLGLYAVG). Ser347 bears the Phosphoserine mark. N-linked (GlcNAc...) asparagine glycosylation is present at Asn363. A Phosphoserine modification is found at Ser386. The N-linked (GlcNAc...) asparagine glycan is linked to Asn433. Ser439 carries the post-translational modification Phosphoserine. A disordered region spans residues 454–494 (SKNESRKMSLQVMDTEPEGQSPPRSIEMRSSSEPSRVGVNG). Asn456 carries N-linked (GlcNAc...) asparagine glycosylation. Phosphoserine is present on residues Ser462 and Ser474. N-linked (GlcNAc...) asparagine glycosylation is found at Asn515, Asn545, and Asn570. Ser608 carries the post-translational modification Phosphoserine. 3 disordered regions span residues 634–654 (PIIQIPSSTEGEGSGSWKWKA), 672–701 (DSESCESLKDSFGSGDRKRSNIDSNEHHHH), and 742–766 (ERSNSPENTRNIFYKGTSPTRAYKD). A compositionally biased stretch (basic and acidic residues) spans 672–697 (DSESCESLKDSFGSGDRKRSNIDSNE). Over residues 743–752 (RSNSPENTRN) the composition is skewed to polar residues.

Belongs to the PA-phosphatase related phosphoesterase family. Post-translationally, O-glycosylated. Probably at Ser-347. In terms of tissue distribution, brain-specific, it is exclusively expressed in neurons (at protein level).

The protein resides in the postsynaptic density membrane. Its function is as follows. Postsynaptic density membrane protein that indirectly regulates glutamatergic synaptic transmission through lysophosphatidic acid (LPA)-mediated signaling pathways. Binds lysophosphatidic acid (LPA) and mediates its internalization into cells. Could act as receptor or a transporter of this lipid at the post-synaptic membrane. Modulates lysophosphatidic acid (LPA) activity in neuron axonal outgrowth during development by attenuating phospholipid-induced axon collapse. The chain is Phospholipid phosphatase-related protein type 4 from Mus musculus (Mouse).